A 556-amino-acid polypeptide reads, in one-letter code: Double-strand-break repair protein rad21-like protein 1 (556 aa).

This sequence belongs to the rad21 family. In terms of assembly, component of some meiotic cohesin complex composed of the SMC1 (SMC1A or SMC1B) and SMC3 heterodimer attached via their hinge domain, RAD21L which link them, and STAG3.

The protein localises to the nucleus. Its subcellular location is the chromosome. Meiosis-specific component of some cohesin complex required during the initial steps of prophase I in male meiosis. Probably required during early meiosis in males for separation of sister chromatids and homologous chromosomes. Replaces RAD21 in premeiotic S phase (during early stages of prophase I), while RAD21 reappears in later stages of prophase I. Involved in synaptonemal complex assembly, synapsis initiation and crossover recombination between homologous chromosomes during prophase I. The protein is Double-strand-break repair protein rad21-like protein 1 (RAD21L1) of Homo sapiens (Human).